The following is a 439-amino-acid chain: Putative porin QuiX (439 aa).

Residues Met1 to Ala22 form the signal peptide.

It belongs to the OprB family.

It is found in the cell outer membrane. In terms of biological role, could be involved in the transport of quinate or shikimate. This Acinetobacter baylyi (strain ATCC 33305 / BD413 / ADP1) protein is Putative porin QuiX (quiX).